A 342-amino-acid polypeptide reads, in one-letter code: S-adenosylmethionine:tRNA ribosyltransferase-isomerase (342 aa).

This sequence belongs to the QueA family. As to quaternary structure, monomer.

Its subcellular location is the cytoplasm. The enzyme catalyses 7-aminomethyl-7-carbaguanosine(34) in tRNA + S-adenosyl-L-methionine = epoxyqueuosine(34) in tRNA + adenine + L-methionine + 2 H(+). The protein operates within tRNA modification; tRNA-queuosine biosynthesis. Transfers and isomerizes the ribose moiety from AdoMet to the 7-aminomethyl group of 7-deazaguanine (preQ1-tRNA) to give epoxyqueuosine (oQ-tRNA). The sequence is that of S-adenosylmethionine:tRNA ribosyltransferase-isomerase from Streptococcus pneumoniae serotype 19F (strain G54).